Reading from the N-terminus, the 67-residue chain is Alpha-conotoxin-like Pu1.1 (67 aa).

The first 21 residues, 1–21 (MGMRMMFTVFLLVVLATTVVS), serve as a signal peptide directing secretion. The propeptide occupies 22-46 (FTSDRTSDGRNAAFNAFDLIALTAR). Q47 is modified (pyrrolidone carboxylic acid). Intrachain disulfides connect C49–C55 and C50–C63. The lacks the Ser-Xaa-Pro motif that is crucial for potent interaction with nAChR stretch occupies residues 51–53 (NVP). C63 carries the post-translational modification Cysteine amide.

This sequence belongs to the conotoxin A superfamily. Expressed by the venom duct.

The protein localises to the secreted. In terms of biological role, alpha-conotoxins act on postsynaptic membranes, they bind to the nicotinic acetylcholine receptors (nAChR) and thus inhibit them. Has possibly a distinct nAChR binding mode from other alpha-conotoxins, due to a different three residue motif (lacks the Ser-Xaa-Pro motif). This chain is Alpha-conotoxin-like Pu1.1, found in Conus pulicarius (Flea-bitten cone).